Here is a 317-residue protein sequence, read N- to C-terminus: Aspartate carbamoyltransferase catalytic subunit (317 aa).

Carbamoyl phosphate is bound by residues Arg-64 and Thr-65. Lys-92 lines the L-aspartate pocket. Residues Arg-114, His-142, and Gln-145 each coordinate carbamoyl phosphate. L-aspartate is bound by residues Arg-176 and Arg-230. Positions 271 and 272 each coordinate carbamoyl phosphate.

The protein belongs to the aspartate/ornithine carbamoyltransferase superfamily. ATCase family. Heterododecamer (2C3:3R2) of six catalytic PyrB chains organized as two trimers (C3), and six regulatory PyrI chains organized as three dimers (R2).

The catalysed reaction is carbamoyl phosphate + L-aspartate = N-carbamoyl-L-aspartate + phosphate + H(+). It functions in the pathway pyrimidine metabolism; UMP biosynthesis via de novo pathway; (S)-dihydroorotate from bicarbonate: step 2/3. In terms of biological role, catalyzes the condensation of carbamoyl phosphate and aspartate to form carbamoyl aspartate and inorganic phosphate, the committed step in the de novo pyrimidine nucleotide biosynthesis pathway. In Nitratidesulfovibrio vulgaris (strain ATCC 29579 / DSM 644 / CCUG 34227 / NCIMB 8303 / VKM B-1760 / Hildenborough) (Desulfovibrio vulgaris), this protein is Aspartate carbamoyltransferase catalytic subunit.